A 350-amino-acid polypeptide reads, in one-letter code: Biotin synthase (350 aa).

The region spanning Asn41 to Arg268 is the Radical SAM core domain. [4Fe-4S] cluster contacts are provided by Cys56, Cys60, and Cys63. [2Fe-2S] cluster is bound by residues Cys100, Cys131, Cys191, and Arg263.

It belongs to the radical SAM superfamily. Biotin synthase family. As to quaternary structure, homodimer. Requires [4Fe-4S] cluster as cofactor. The cofactor is [2Fe-2S] cluster.

The enzyme catalyses (4R,5S)-dethiobiotin + (sulfur carrier)-SH + 2 reduced [2Fe-2S]-[ferredoxin] + 2 S-adenosyl-L-methionine = (sulfur carrier)-H + biotin + 2 5'-deoxyadenosine + 2 L-methionine + 2 oxidized [2Fe-2S]-[ferredoxin]. The protein operates within cofactor biosynthesis; biotin biosynthesis; biotin from 7,8-diaminononanoate: step 2/2. Functionally, catalyzes the conversion of dethiobiotin (DTB) to biotin by the insertion of a sulfur atom into dethiobiotin via a radical-based mechanism. This Shewanella halifaxensis (strain HAW-EB4) protein is Biotin synthase.